The primary structure comprises 339 residues: Annexin A2 (339 aa).

Serine 2 is subject to N-acetylserine. Residues 2-24 (STVHEILCKLSLEGDHSTPPSAY) form an S100A10-binding site region. Tyrosine 24 carries the post-translational modification Phosphotyrosine; by SRC. At serine 26 the chain carries Phosphoserine; by PKC. Annexin repeat units lie at residues 33-104 (FDAE…GLLK) and 105-176 (TPAQ…ALAK). An N6-acetyllysine; alternate modification is found at lysine 49. Lysine 49 participates in a covalent cross-link: Glycyl lysine isopeptide (Lys-Gly) (interchain with G-Cter in SUMO1); alternate. Residue lysine 49 forms a Glycyl lysine isopeptide (Lys-Gly) (interchain with G-Cter in SUMO2); alternate linkage. Lysine 152 is modified (N6-acetyllysine). Serine 184 is modified (phosphoserine). Annexin repeat units follow at residues 189 to 261 (ELID…NLVQ) and 265 to 336 (NKPL…YLCG). Tyrosine 199 bears the Phosphotyrosine mark. Lysine 227 carries the post-translational modification N6-acetyllysine.

The protein belongs to the annexin family. Heterotetramer containing 2 light chains of S100A10/p11 and 2 heavy chains of ANXA2/p36. Interacts with ATP1B1. Interacts with DYSF. Interacts with COCH. Interacts (via repeat Annexin 1) with PCSK9 (via the C-terminal domain); the interaction inhibits the degradation of LDLR. Interacts with CEACAM1 (via the cytoplasmic domain); this interaction is regulated by phosphorylation of CEACAM1. Interacts with APPL2 and APPL1; targets APPL2 to endosomes and acting in parallel to RAB5A. Interacts with S100A4. May interact with UBAP2. Interacts with PLEKHG4B; this interaction is required for PLEKHG4B localization to cell-cell adhesions. In terms of processing, ISGylated.

It localises to the secreted. Its subcellular location is the extracellular space. The protein resides in the extracellular matrix. It is found in the basement membrane. The protein localises to the melanosome. In terms of biological role, calcium-regulated membrane-binding protein whose affinity for calcium is greatly enhanced by anionic phospholipids. It binds two calcium ions with high affinity. May be involved in heat-stress response. Inhibits PCSK9-enhanced LDLR degradation, probably reduces PCSK9 protein levels via a translational mechanism but also competes with LDLR for binding with PCSK9. Binds to endosomes damaged by phagocytosis of particulate wear debris and participates in endosomal membrane stabilization, thereby limiting NLRP3 inflammasome activation. Required for endothelial cell surface plasmin generation and may support fibrinolytic surveillance and neoangiogenesis. This chain is Annexin A2 (ANXA2), found in Bos taurus (Bovine).